Reading from the N-terminus, the 486-residue chain is Aspartyl/glutamyl-tRNA(Asn/Gln) amidotransferase subunit B (486 aa).

The protein belongs to the GatB/GatE family. GatB subfamily. Heterotrimer of A, B and C subunits.

It catalyses the reaction L-glutamyl-tRNA(Gln) + L-glutamine + ATP + H2O = L-glutaminyl-tRNA(Gln) + L-glutamate + ADP + phosphate + H(+). The enzyme catalyses L-aspartyl-tRNA(Asn) + L-glutamine + ATP + H2O = L-asparaginyl-tRNA(Asn) + L-glutamate + ADP + phosphate + 2 H(+). Its function is as follows. Allows the formation of correctly charged Asn-tRNA(Asn) or Gln-tRNA(Gln) through the transamidation of misacylated Asp-tRNA(Asn) or Glu-tRNA(Gln) in organisms which lack either or both of asparaginyl-tRNA or glutaminyl-tRNA synthetases. The reaction takes place in the presence of glutamine and ATP through an activated phospho-Asp-tRNA(Asn) or phospho-Glu-tRNA(Gln). In Janthinobacterium sp. (strain Marseille) (Minibacterium massiliensis), this protein is Aspartyl/glutamyl-tRNA(Asn/Gln) amidotransferase subunit B.